The primary structure comprises 142 residues: Organic hydroperoxide resistance protein-like 2 (142 aa).

This sequence belongs to the OsmC/Ohr family.

The sequence is that of Organic hydroperoxide resistance protein-like 2 from Staphylococcus epidermidis (strain ATCC 12228 / FDA PCI 1200).